The primary structure comprises 130 residues: Small ribosomal subunit protein uS11c (130 aa).

The protein belongs to the universal ribosomal protein uS11 family. In terms of assembly, part of the 30S ribosomal subunit.

It is found in the plastid. Its subcellular location is the chloroplast. The sequence is that of Small ribosomal subunit protein uS11c from Bigelowiella natans (Pedinomonas minutissima).